The primary structure comprises 162 residues: Phosphopantetheine adenylyltransferase (162 aa).

Threonine 10 contacts substrate. Residues 10 to 11 (TF) and histidine 18 contribute to the ATP site. Lysine 42, leucine 74, and arginine 88 together coordinate substrate. ATP contacts are provided by residues 89–91 (GLR), glutamate 99, and 124–130 (YAFLSSS).

It belongs to the bacterial CoaD family. Homohexamer. Requires Mg(2+) as cofactor.

The protein resides in the cytoplasm. The enzyme catalyses (R)-4'-phosphopantetheine + ATP + H(+) = 3'-dephospho-CoA + diphosphate. Its pathway is cofactor biosynthesis; coenzyme A biosynthesis; CoA from (R)-pantothenate: step 4/5. Reversibly transfers an adenylyl group from ATP to 4'-phosphopantetheine, yielding dephospho-CoA (dPCoA) and pyrophosphate. The chain is Phosphopantetheine adenylyltransferase from Methylococcus capsulatus (strain ATCC 33009 / NCIMB 11132 / Bath).